Here is an 819-residue protein sequence, read N- to C-terminus: MDTEGFGELLQQAEQLAAETEGISELPHVERNLQEIQQAGERLRSRTLTRTSQETADVKASVLLGSRGLDISHISQRLESLSAATTFEPLEPVKDTDIQGFLKNEKDNALLSAIEESRKRTFGMAEEYHRESMLVEWEQVKQRILHTLLASGEDALDFTQESEPSYVSDVSPPGRSSLDSIEMAYARQIYIYNEKIVSGHLQPNLVDLCASVAELDDKSISDMWAMVKQMTDVVLTPATDALKSRSSVEVRMDFVKQALGYLEQSYKNYTLVTVFGNLHQAQLGGVPGTYQLVRSFLNIKLPAPSPGLQDGEVEGHPVWALIYYCMRCGDLLAASQVVSRAQHQLGEFKTWFQEYMNSKDRRLSPATENKLRLHYRRALRNNTDPYKRAVYCIIGRCDITDNQSEVADKTEDYLWLKLNQVCFDDDGTSSPQDRLTLSQFQKQLLEDYGESHFTVNQQPFLYFQVLFLTAQFEAAIAFLFRMERLRCHAVHVALVLFELKLLLKSSGQSAQLLSHEPGDPPCMRRLNFVRLLMLYTRKFESTDPREALQYFYFLRDEKDSQGENMFLRCVSELVIESREFDMILGKLENDGSRKPGVIDKFTSDTKPIINKVASVAENKGLFEEAAKLYDLAKNADKVLELMNKLLSPVVPQISAPQSNKERLKNMALSIAERYRAQGISANKFVDSTFYLLLDLITFFDEYHSGHIDRAFDIIDRLKLVPLNQESMEERVAAFRNFSDEIRHNLSEVLLATMNILFTQFKRLKGTSPSSATRPQRVIEDRDSQLRSQARALITFAGMIPYRTSGDTNARLVQMEVLMN.

Threonine 49 bears the Phosphothreonine mark. 7 positions are modified to phosphoserine: serine 52, serine 66, serine 72, serine 75, serine 80, serine 430, and serine 767.

It belongs to the nucleoporin interacting component (NIC) family. Part of the nuclear pore complex (NPC). Component of the p62 complex, a complex composed of NUP62 and NUP54. Forms a complex with NUP35, NUP155, NUP205 and lamin B; the interaction with NUP35 is direct. Does not interact with TPR. Interacts with SMAD4 and IPO7; translocates SMAD4 to the nucleus through the NPC upon BMP7 stimulation resulting in activation of SMAD4 signaling.

Its subcellular location is the nucleus membrane. The protein resides in the nucleus. The protein localises to the nuclear pore complex. It is found in the nucleus envelope. Functionally, plays a role in the nuclear pore complex (NPC) assembly and/or maintenance. May anchor nucleoporins, but not NUP153 and TPR, to the NPC. During renal development, regulates podocyte migration and proliferation through SMAD4 signaling. The sequence is that of Nuclear pore complex protein Nup93 (Nup93) from Rattus norvegicus (Rat).